A 160-amino-acid polypeptide reads, in one-letter code: MKKAHMFLATAAALGVAMFPTQINEAARGLRNNNPLNIKEGSDGGAQWEGEHELDLDPTFEEFKTPVHGIRAGARILRTYAVKYGLESIEGIIARWAPEEENDTENYINFVANKTGIPRNQKLNDETYPAVISAMIDMENGSNPYTYDEIKKGFEWGFYG.

A helical transmembrane segment spans residues 7 to 23 (FLATAAALGVAMFPTQI).

The protein localises to the virion membrane. The polypeptide is Protein P5 (V) (Pseudoalteromonas espejiana (Bacteriophage PM2)).